Here is a 284-residue protein sequence, read N- to C-terminus: Tropomyosin alpha-1 chain (284 aa).

Met1 is subject to N-acetylmethionine. A disordered region spans residues 1–40 (MDAIKKKMQMLKLDKENALDRAEQAESDKKASEDRSKQLE). Positions 1–284 (MDAIKKKMQM…DHALNDMTSI (284 aa)) form a coiled coil. The segment covering 12 to 40 (KLDKENALDRAEQAESDKKASEDRSKQLE) has biased composition (basic and acidic residues).

Homodimer. Heterodimer of an alpha (TPM1, TPM3 or TPM4) and a beta (TPM2) chain.

The protein resides in the cytoplasm. It is found in the cytoskeleton. Binds to actin filaments in muscle and non-muscle cells. Plays a central role, in association with the troponin complex, in the calcium dependent regulation of vertebrate striated muscle contraction. Smooth muscle contraction is regulated by interaction with caldesmon. In non-muscle cells is implicated in stabilizing cytoskeleton actin filaments. The sequence is that of Tropomyosin alpha-1 chain from Chelon auratus (Golden grey mullet).